A 412-amino-acid chain; its full sequence is Proteasome-activating nucleotidase 2 (412 aa).

Positions 28-74 form a coiled coil; sequence LRQHFERMVDVNRELDQRLQNADDRHAELVDEVDQMKARNEALKTAS. Residues 196-201 and His335 each bind ATP; that span reads GTGKTM. A docks into pockets in the proteasome alpha-ring to cause gate opening region spans residues 409 to 412; that stretch reads DYQY.

Belongs to the AAA ATPase family. Homohexamer. The hexameric complex has a two-ring architecture resembling a top hat that caps the 20S proteasome core at one or both ends. Upon ATP-binding, the C-terminus of PAN interacts with the alpha-rings of the proteasome core by binding to the intersubunit pockets.

Its subcellular location is the cytoplasm. In terms of biological role, ATPase which is responsible for recognizing, binding, unfolding and translocation of substrate proteins into the archaeal 20S proteasome core particle. Is essential for opening the gate of the 20S proteasome via an interaction with its C-terminus, thereby allowing substrate entry and access to the site of proteolysis. Thus, the C-termini of the proteasomal ATPase function like a 'key in a lock' to induce gate opening and therefore regulate proteolysis. Unfolding activity requires energy from ATP hydrolysis, whereas ATP binding alone promotes ATPase-20S proteasome association which triggers gate opening, and supports translocation of unfolded substrates. This is Proteasome-activating nucleotidase 2 from Haloferax volcanii (strain ATCC 29605 / DSM 3757 / JCM 8879 / NBRC 14742 / NCIMB 2012 / VKM B-1768 / DS2) (Halobacterium volcanii).